We begin with the raw amino-acid sequence, 125 residues long: Large ribosomal subunit protein bL12 (125 aa).

Belongs to the bacterial ribosomal protein bL12 family. As to quaternary structure, homodimer. Part of the ribosomal stalk of the 50S ribosomal subunit. Forms a multimeric L10(L12)X complex, where L10 forms an elongated spine to which 2 to 4 L12 dimers bind in a sequential fashion. Binds GTP-bound translation factors.

Functionally, forms part of the ribosomal stalk which helps the ribosome interact with GTP-bound translation factors. Is thus essential for accurate translation. This is Large ribosomal subunit protein bL12 from Rickettsia canadensis (strain McKiel).